We begin with the raw amino-acid sequence, 43 residues long: Protein PsbN (43 aa).

Residues 5-27 form a helical membrane-spanning segment; that stretch reads TLVAIFISGSLVSFTGYALYTAF.

The protein belongs to the PsbN family.

It localises to the plastid. The protein resides in the chloroplast thylakoid membrane. May play a role in photosystem I and II biogenesis. The sequence is that of Protein PsbN from Nelumbo lutea (American lotus).